The sequence spans 201 residues: FMN-dependent NADH:quinone oxidoreductase (201 aa).

Residues serine 10, 16–18 (SQS), 96–99 (MYNF), and 140–143 (SRGG) contribute to the FMN site.

It belongs to the azoreductase type 1 family. As to quaternary structure, homodimer. Requires FMN as cofactor.

The enzyme catalyses 2 a quinone + NADH + H(+) = 2 a 1,4-benzosemiquinone + NAD(+). It catalyses the reaction N,N-dimethyl-1,4-phenylenediamine + anthranilate + 2 NAD(+) = 2-(4-dimethylaminophenyl)diazenylbenzoate + 2 NADH + 2 H(+). In terms of biological role, quinone reductase that provides resistance to thiol-specific stress caused by electrophilic quinones. Also exhibits azoreductase activity. Catalyzes the reductive cleavage of the azo bond in aromatic azo compounds to the corresponding amines. The chain is FMN-dependent NADH:quinone oxidoreductase from Shigella flexneri serotype 5b (strain 8401).